The primary structure comprises 335 residues: GTPase Obg (335 aa).

An Obg domain is found at Met-1–Met-159. The OBG-type G domain maps to Ala-160–Ser-323. GTP is bound by residues Gly-166–Ser-173, Phe-191–Val-195, Asp-213–Gly-216, Thr-280–Asp-283, and Ser-304–Val-306. 2 residues coordinate Mg(2+): Ser-173 and Thr-193.

The protein belongs to the TRAFAC class OBG-HflX-like GTPase superfamily. OBG GTPase family. In terms of assembly, monomer. The cofactor is Mg(2+).

Its subcellular location is the cytoplasm. Functionally, an essential GTPase which binds GTP, GDP and possibly (p)ppGpp with moderate affinity, with high nucleotide exchange rates and a fairly low GTP hydrolysis rate. Plays a role in control of the cell cycle, stress response, ribosome biogenesis and in those bacteria that undergo differentiation, in morphogenesis control. In Chlorobaculum parvum (strain DSM 263 / NCIMB 8327) (Chlorobium vibrioforme subsp. thiosulfatophilum), this protein is GTPase Obg.